Here is a 526-residue protein sequence, read N- to C-terminus: ATP-dependent RNA helicase DBP3 (526 aa).

Over residues 1 to 33 (MVEEHKNKKRRQEDGPADVPEKKVKVSKSEKKD) the composition is skewed to basic and acidic residues. The interval 1 to 86 (MVEEHKNKKR…SSQGYTQSES (86 aa)) is disordered. The segment covering 34 to 65 (KKEKKEKKEKKEKKEKKEKKEKKEKKEKKKKY) has biased composition (basic residues). Polar residues predominate over residues 69–86 (ATISGSAQSSQGYTQSES). The Q motif motif lies at 118–144 (LSFDQIQLNSKISAVVNKFPTPTPIQS). A Helicase ATP-binding domain is found at 147–318 (WPYLLSGKDV…STFMNQPVKV (172 aa)). 160 to 167 (AETGSGKT) is an ATP binding site. The short motif at 265–268 (DEAD) is the DEAD box element. The Helicase C-terminal domain occupies 334 to 496 (QIVEVIEPFD…PVPDELLKFG (163 aa)).

Belongs to the DEAD box helicase family. DDX5/DBP2 subfamily.

It is found in the nucleus. It localises to the nucleolus. It carries out the reaction ATP + H2O = ADP + phosphate + H(+). In terms of biological role, ATP-dependent RNA helicase required for 60S ribosomal subunit synthesis. Involved in efficient pre-rRNA processing, predominantly at site A3, which is necessary for the normal formation of 25S and 5.8S rRNAs. The polypeptide is ATP-dependent RNA helicase DBP3 (DBP3) (Scheffersomyces stipitis (strain ATCC 58785 / CBS 6054 / NBRC 10063 / NRRL Y-11545) (Yeast)).